A 179-amino-acid polypeptide reads, in one-letter code: MSRIGKMPISLSNQAKIEISDANVKVTGPKGTLEQALVAQVTLQEENGVVTVQRVDETKKSKAMHGLYRMLISNMVEGVTKGFTRKLEIAGVGYRAELKNDLLALTLGYSHMIYFKAPDSIKIEVPDQTTILISGIDKALVGQVAAKIRSFRKPEPYRGKGIKYEGEVIRRKEGKAAGK.

It belongs to the universal ribosomal protein uL6 family. Part of the 50S ribosomal subunit.

Functionally, this protein binds to the 23S rRNA, and is important in its secondary structure. It is located near the subunit interface in the base of the L7/L12 stalk, and near the tRNA binding site of the peptidyltransferase center. The polypeptide is Large ribosomal subunit protein uL6 (Chlorobium limicola (strain DSM 245 / NBRC 103803 / 6330)).